A 465-amino-acid polypeptide reads, in one-letter code: Uronate isomerase (465 aa).

It belongs to the metallo-dependent hydrolases superfamily. Uronate isomerase family.

It catalyses the reaction D-glucuronate = D-fructuronate. The enzyme catalyses aldehydo-D-galacturonate = keto-D-tagaturonate. Its pathway is carbohydrate metabolism; pentose and glucuronate interconversion. The protein is Uronate isomerase of Bacillus velezensis (strain DSM 23117 / BGSC 10A6 / LMG 26770 / FZB42) (Bacillus amyloliquefaciens subsp. plantarum).